Here is an 820-residue protein sequence, read N- to C-terminus: Trimethylamine-N-oxide reductase (820 aa).

Residues 1–33 (MAITRRSFLKGVATTSAASVIGPSLLASASANA) constitute a signal peptide (tat-type signal). Mo-bis(molybdopterin guanine dinucleotide) is bound at residue Ser179.

Belongs to the prokaryotic molybdopterin-containing oxidoreductase family. It depends on Mo-bis(molybdopterin guanine dinucleotide) as a cofactor. Predicted to be exported by the Tat system. The position of the signal peptide cleavage has not been experimentally proven.

It is found in the periplasm. The enzyme catalyses trimethylamine + 2 Fe(III)-[cytochrome c] + H2O = trimethylamine N-oxide + 2 Fe(II)-[cytochrome c] + 3 H(+). Reduces trimethylamine-N-oxide (TMAO) into trimethylamine; an anaerobic reaction coupled to energy-yielding reactions. The polypeptide is Trimethylamine-N-oxide reductase (torA) (Vibrio parahaemolyticus serotype O3:K6 (strain RIMD 2210633)).